A 233-amino-acid polypeptide reads, in one-letter code: 5'-methylthioadenosine/S-adenosylhomocysteine nucleosidase (233 aa).

E12 functions as the Proton acceptor in the catalytic mechanism. Substrate is bound by residues G78, I156, and 177 to 178 (ME). Residue D201 is the Proton donor of the active site.

It belongs to the PNP/UDP phosphorylase family. MtnN subfamily.

It catalyses the reaction S-adenosyl-L-homocysteine + H2O = S-(5-deoxy-D-ribos-5-yl)-L-homocysteine + adenine. The catalysed reaction is S-methyl-5'-thioadenosine + H2O = 5-(methylsulfanyl)-D-ribose + adenine. It carries out the reaction 5'-deoxyadenosine + H2O = 5-deoxy-D-ribose + adenine. It participates in amino-acid biosynthesis; L-methionine biosynthesis via salvage pathway; S-methyl-5-thio-alpha-D-ribose 1-phosphate from S-methyl-5'-thioadenosine (hydrolase route): step 1/2. In terms of biological role, catalyzes the irreversible cleavage of the glycosidic bond in both 5'-methylthioadenosine (MTA) and S-adenosylhomocysteine (SAH/AdoHcy) to adenine and the corresponding thioribose, 5'-methylthioribose and S-ribosylhomocysteine, respectively. Also cleaves 5'-deoxyadenosine, a toxic by-product of radical S-adenosylmethionine (SAM) enzymes, into 5-deoxyribose and adenine. The protein is 5'-methylthioadenosine/S-adenosylhomocysteine nucleosidase of Listeria monocytogenes serovar 1/2a (strain ATCC BAA-679 / EGD-e).